The chain runs to 734 residues: Photosystem I P700 chlorophyll a apoprotein A2 (734 aa).

8 helical membrane-spanning segments follow: residues 46-69 (IFASHFGQLAIIFLWTSGNLFHVA), 135-158 (LYTASVFLSLMAGVFLFAGWLHLQ), 175-199 (LNHHLSGLFGVSSLAWTGHLVHVAI), 273-291 (IAHHHLAIAVVFIIAGHQY), 330-353 (LHFQLGLALASVGTICSMVAQHIY), 369-395 (AALYTHHQYIAGFIMCGAFAHGAIFFI), 417-439 (AIISHLSWVSLFLGFHTLGLYVH), and 517-535 (FLVHHAIALGLHTTTLILV). [4Fe-4S] cluster-binding residues include Cys-559 and Cys-568. The next 2 membrane-spanning stretches (helical) occupy residues 575–596 (AFYLAVFWMLNTIGWVTFYFHW) and 643–665 (LGVWSWAFLLAHLIYATGFMFLI). 3 residues coordinate chlorophyll a: His-654, Met-662, and Tyr-670. Trp-671 contacts phylloquinone. Residues 707-727 (LVGLVHFSVGYVLTYGSFLIA) form a helical membrane-spanning segment.

This sequence belongs to the PsaA/PsaB family. As to quaternary structure, the PsaA/B heterodimer binds the P700 chlorophyll special pair and subsequent electron acceptors. PSI consists of a core antenna complex that captures photons, and an electron transfer chain that converts photonic excitation into a charge separation. The eukaryotic PSI reaction center is composed of at least 11 subunits. P700 is a chlorophyll a/chlorophyll a' dimer, A0 is one or more chlorophyll a, A1 is one or both phylloquinones and FX is a shared 4Fe-4S iron-sulfur center. serves as cofactor.

Its subcellular location is the plastid. The protein resides in the chloroplast thylakoid membrane. It catalyses the reaction reduced [plastocyanin] + hnu + oxidized [2Fe-2S]-[ferredoxin] = oxidized [plastocyanin] + reduced [2Fe-2S]-[ferredoxin]. Functionally, psaA and PsaB bind P700, the primary electron donor of photosystem I (PSI), as well as the electron acceptors A0, A1 and FX. PSI is a plastocyanin/cytochrome c6-ferredoxin oxidoreductase, converting photonic excitation into a charge separation, which transfers an electron from the donor P700 chlorophyll pair to the spectroscopically characterized acceptors A0, A1, FX, FA and FB in turn. Oxidized P700 is reduced on the lumenal side of the thylakoid membrane by plastocyanin or cytochrome c6. This chain is Photosystem I P700 chlorophyll a apoprotein A2, found in Oltmannsiellopsis viridis (Marine flagellate).